The chain runs to 508 residues: Photosystem II CP47 reaction center protein (508 aa).

A run of 6 helical transmembrane segments spans residues 21–36 (AVHI…WAGS), 101–115 (IVFS…IWHW), 140–156 (GIHL…FGAF), 203–218 (IAAG…FHLS), 237–252 (VLSS…AFVV), and 457–472 (SFAL…HGAR).

This sequence belongs to the PsbB/PsbC family. PsbB subfamily. As to quaternary structure, PSII is composed of 1 copy each of membrane proteins PsbA, PsbB, PsbC, PsbD, PsbE, PsbF, PsbH, PsbI, PsbJ, PsbK, PsbL, PsbM, PsbT, PsbX, PsbY, PsbZ, Psb30/Ycf12, at least 3 peripheral proteins of the oxygen-evolving complex and a large number of cofactors. It forms dimeric complexes. Binds multiple chlorophylls. PSII binds additional chlorophylls, carotenoids and specific lipids. serves as cofactor.

It localises to the plastid. It is found in the chloroplast thylakoid membrane. In terms of biological role, one of the components of the core complex of photosystem II (PSII). It binds chlorophyll and helps catalyze the primary light-induced photochemical processes of PSII. PSII is a light-driven water:plastoquinone oxidoreductase, using light energy to abstract electrons from H(2)O, generating O(2) and a proton gradient subsequently used for ATP formation. The polypeptide is Photosystem II CP47 reaction center protein (Daucus carota (Wild carrot)).